A 273-amino-acid chain; its full sequence is Putative phosphoenolpyruvate synthase regulatory protein (273 aa).

154 to 161 (GVSRSGKT) lines the ADP pocket.

It belongs to the pyruvate, phosphate/water dikinase regulatory protein family. PSRP subfamily.

The enzyme catalyses [pyruvate, water dikinase] + ADP = [pyruvate, water dikinase]-phosphate + AMP + H(+). The catalysed reaction is [pyruvate, water dikinase]-phosphate + phosphate + H(+) = [pyruvate, water dikinase] + diphosphate. Bifunctional serine/threonine kinase and phosphorylase involved in the regulation of the phosphoenolpyruvate synthase (PEPS) by catalyzing its phosphorylation/dephosphorylation. In Neisseria gonorrhoeae (strain ATCC 700825 / FA 1090), this protein is Putative phosphoenolpyruvate synthase regulatory protein.